The chain runs to 228 residues: RNA pyrophosphohydrolase (228 aa).

The segment at 1–70 is unknown; it reads MEKRSGIGRL…KQWVKMMNDI (70 aa). Residues 71-228 form a rppH domain region; it reads VIDKRGFRLG…VLTEFAEFIR (158 aa). A Nudix hydrolase domain is found at 76–221; the sequence is GFRLGVGMVI…KRDVYQKVLT (146 aa). Residues 109–130 carry the Nudix box motif; sequence GGLLPNETLREALNRELDEEVG.

The protein in the C-terminal section; belongs to the Nudix hydrolase family. RppH subfamily. A divalent metal cation serves as cofactor.

Functionally, accelerates the degradation of transcripts by removing pyrophosphate from the 5'-end of triphosphorylated RNA, leading to a more labile monophosphorylated state that can stimulate subsequent ribonuclease cleavage. This is RNA pyrophosphohydrolase from Coxiella burnetii (strain RSA 493 / Nine Mile phase I).